Here is a 396-residue protein sequence, read N- to C-terminus: Ribosomal RNA large subunit methyltransferase I (396 aa).

In terms of domain architecture, PUA spans Ser-2–Arg-81.

Belongs to the methyltransferase superfamily. RlmI family.

It is found in the cytoplasm. The catalysed reaction is cytidine(1962) in 23S rRNA + S-adenosyl-L-methionine = 5-methylcytidine(1962) in 23S rRNA + S-adenosyl-L-homocysteine + H(+). Specifically methylates the cytosine at position 1962 (m5C1962) of 23S rRNA. This is Ribosomal RNA large subunit methyltransferase I from Escherichia coli (strain SMS-3-5 / SECEC).